We begin with the raw amino-acid sequence, 329 residues long: Ketol-acid reductoisomerase (NADP(+)) (329 aa).

One can recognise a KARI N-terminal Rossmann domain in the interval 2 to 182; it reads ARMYYEKDVD…GATRAGVLET (181 aa). NADP(+)-binding positions include 25 to 28, Ser-51, Ser-53, and 83 to 86; these read YGSQ and DEKQ. His-108 is an active-site residue. Residue Gly-134 participates in NADP(+) binding. One can recognise a KARI C-terminal knotted domain in the interval 183-328; sequence TFKEETETDL…RNLRSMMSFL (146 aa). The Mg(2+) site is built by Asp-191, Glu-195, Glu-227, and Glu-231. Residue Ser-252 participates in substrate binding.

It belongs to the ketol-acid reductoisomerase family. Requires Mg(2+) as cofactor.

It catalyses the reaction (2R)-2,3-dihydroxy-3-methylbutanoate + NADP(+) = (2S)-2-acetolactate + NADPH + H(+). The catalysed reaction is (2R,3R)-2,3-dihydroxy-3-methylpentanoate + NADP(+) = (S)-2-ethyl-2-hydroxy-3-oxobutanoate + NADPH + H(+). The protein operates within amino-acid biosynthesis; L-isoleucine biosynthesis; L-isoleucine from 2-oxobutanoate: step 2/4. Its pathway is amino-acid biosynthesis; L-valine biosynthesis; L-valine from pyruvate: step 2/4. Functionally, involved in the biosynthesis of branched-chain amino acids (BCAA). Catalyzes an alkyl-migration followed by a ketol-acid reduction of (S)-2-acetolactate (S2AL) to yield (R)-2,3-dihydroxy-isovalerate. In the isomerase reaction, S2AL is rearranged via a Mg-dependent methyl migration to produce 3-hydroxy-3-methyl-2-ketobutyrate (HMKB). In the reductase reaction, this 2-ketoacid undergoes a metal-dependent reduction by NADPH to yield (R)-2,3-dihydroxy-isovalerate. In Clostridioides difficile (strain 630) (Peptoclostridium difficile), this protein is Ketol-acid reductoisomerase (NADP(+)).